Consider the following 290-residue polypeptide: Lysine export transcriptional regulatory protein LysG (290 aa).

The region spanning 1-57 (MNPIQLDTLLSIIDEGSFEGASLALSISPSAVSQRVKALEHHVGRVLVSRTQPAKAT) is the HTH lysR-type domain. The segment at residues 18–37 (FEGASLALSISPSAVSQRVK) is a DNA-binding region (H-T-H motif).

The protein belongs to the LysR transcriptional regulatory family.

In terms of biological role, positively regulates the expression of the exporter LysE. Induction requires the presence of a coinducer, which is either intracellular L-lysine, L-arginine or L-citrulline. L-histidine also acts as a coinducer of lysE expression, but this amino acid is not exported by LysE. The lysEG system prevents bacteriostasis due to elevated L-lysine or L-arginine concentrations that arise during growth in the presence of peptides or in mutants possessing a deregulated biosynthesis pathway. The chain is Lysine export transcriptional regulatory protein LysG from Corynebacterium glutamicum (strain ATCC 13032 / DSM 20300 / JCM 1318 / BCRC 11384 / CCUG 27702 / LMG 3730 / NBRC 12168 / NCIMB 10025 / NRRL B-2784 / 534).